The following is a 347-amino-acid chain: Phenylalanine--tRNA ligase alpha subunit (347 aa).

E261 is a Mg(2+) binding site.

The protein belongs to the class-II aminoacyl-tRNA synthetase family. Phe-tRNA synthetase alpha subunit type 1 subfamily. In terms of assembly, tetramer of two alpha and two beta subunits. Mg(2+) serves as cofactor.

It localises to the cytoplasm. The catalysed reaction is tRNA(Phe) + L-phenylalanine + ATP = L-phenylalanyl-tRNA(Phe) + AMP + diphosphate + H(+). The polypeptide is Phenylalanine--tRNA ligase alpha subunit (Streptococcus pyogenes serotype M1).